A 123-amino-acid polypeptide reads, in one-letter code: Large ribosomal subunit protein uL18 (123 aa).

Belongs to the universal ribosomal protein uL18 family. As to quaternary structure, part of the 50S ribosomal subunit; part of the 5S rRNA/L5/L18/L25 subcomplex. Contacts the 5S and 23S rRNAs.

This is one of the proteins that bind and probably mediate the attachment of the 5S RNA into the large ribosomal subunit, where it forms part of the central protuberance. This chain is Large ribosomal subunit protein uL18, found in Wolbachia pipientis subsp. Culex pipiens (strain wPip).